An 857-amino-acid polypeptide reads, in one-letter code: Leucine-rich repeat extensin-like protein 5 (857 aa).

Positions 1–31 (MKTKMMMKNTSLIFVLLFITFFFTSISYSLS) are cleaved as a signal peptide. One copy of the LRR 1 repeat lies at 32–53 (LTFNGDLSDNEVRLITQRQLLY). Asparagine 98 carries an N-linked (GlcNAc...) asparagine glycan. LRR repeat units lie at residues 125–149 (IRTV…LGLL), 150–172 (TDLA…RFNR), 174–197 (KLLF…VLQL), 198–221 (PSLK…LFSK), 223–244 (LDAI…LGDS), 246–267 (VSVI…LGDM), 268–291 (RNLE…IGRL), 292–315 (KNVT…IGGM), 316–339 (VSME…ICQL), and 341–362 (RLEN…CLGL). Residue asparagine 293 is glycosylated (N-linked (GlcNAc...) asparagine). N-linked (GlcNAc...) asparagine glycosylation is present at asparagine 344. Disordered stretches follow at residues 406–776 (PPVV…EYSP) and 817–839 (YSPP…YEGP). Pro residues-rich tracts occupy residues 408-571 (VVVP…PTPI) and 579-768 (PIIP…PQSH). The segment at 615–857 (SPPPSTPTPV…YASPPPPPFY (243 aa)) is contains the Ser-Pro(4) repeats.

Hydroxylated on proline residues in the S-P-P-P-P repeat. Post-translationally, O-glycosylated on hydroxyprolines. In terms of tissue distribution, expressed in roots, leaves and flowers.

Its subcellular location is the secreted. It is found in the cell wall. Functionally, modulates cell morphogenesis by regulating cell wall formation and assembly, and/or growth polarization. This Arabidopsis thaliana (Mouse-ear cress) protein is Leucine-rich repeat extensin-like protein 5 (LRX5).